The following is a 343-amino-acid chain: Dihydroorotase (343 aa).

Zn(2+) contacts are provided by H14 and H16. Substrate is bound by residues 16–18 and N42; that span reads HVR. Zn(2+) contacts are provided by K99, H136, and H174. N6-carboxylysine is present on K99. H136 lines the substrate pocket. Residue L219 coordinates substrate. D247 contributes to the Zn(2+) binding site. The active site involves D247. Positions 251 and 263 each coordinate substrate.

This sequence belongs to the metallo-dependent hydrolases superfamily. DHOase family. Class II DHOase subfamily. In terms of assembly, homodimer. It depends on Zn(2+) as a cofactor.

The catalysed reaction is (S)-dihydroorotate + H2O = N-carbamoyl-L-aspartate + H(+). It functions in the pathway pyrimidine metabolism; UMP biosynthesis via de novo pathway; (S)-dihydroorotate from bicarbonate: step 3/3. Its function is as follows. Catalyzes the reversible cyclization of carbamoyl aspartate to dihydroorotate. The chain is Dihydroorotase from Variovorax paradoxus (strain S110).